The primary structure comprises 797 residues: Kinesin-like protein KIF18B (797 aa).

The region spanning 11–352 (TVAVVVRVRP…LKYANRAKEI (342 aa)) is the Kinesin motor domain. 110–117 (GATGAGKT) serves as a coordination point for ATP. Residues 367–402 (ISKYATICEQLKTEVADLQAKLRAYEDAARDAGKQI) adopt a coiled-coil conformation. Disordered regions lie at residues 412-476 (EEAV…PNRL), 528-564 (AAVS…PSVP), 579-640 (LSSP…KEPQ), and 730-797 (KGSS…SGPR). Positions 594 to 608 (MSNTSRLETPHSLNT) are enriched in polar residues. The segment covering 731-744 (GSSIPKPSSISKGS) has biased composition (low complexity).

The protein belongs to the TRAFAC class myosin-kinesin ATPase superfamily. Kinesin family.

Its subcellular location is the nucleus. The protein localises to the cytoplasm. The protein resides in the cytoskeleton. In terms of biological role, may play an important role in microtubule plus-end depolymerizing activity in mitotic cells. This Gallus gallus (Chicken) protein is Kinesin-like protein KIF18B (KIF18B).